The sequence spans 772 residues: Endoplasmic reticulum membrane sensor NFE2L1 (772 aa).

Residues 7–24 (YLTEGLLQFTILLSLIGV) form a helical; Signal-anchor for type II membrane protein membrane-spanning segment. The tract at residues 108–148 (DPEGSVSGSQPNSGLALESSSGLQDVTGPDNGVRESETEQG) is disordered. The segment covering 113–131 (VSGSQPNSGLALESSSGLQ) has biased composition (polar residues). Positions 191–199 (VFDYSHRQK) are cholesterol recognition/amino acid consensus (CRAC) region. Asparagine 348 is a glycosylation site (N-linked (GlcNAc...) asparagine). The interval 379–383 (SPEVE) is CPD. N-linked (GlcNAc...) asparagine glycans are attached at residues asparagine 412 and asparagine 423. Positions 470 to 532 (EEEFDSDSGL…AVGYSSDSET (63 aa)) are disordered. The short motif at 476–480 (DSGLS) is the Destruction motif element. Residues 476–523 (DSGLSLDSSHSPSSLSSSEGSSSSSSSSSSSSSSASSSASSSFSEEGA) are compositionally biased toward low complexity. Position 528 is a phosphoserine; by CK2 (serine 528). Serine 599 bears the Phosphoserine; by PKA mark. Positions 654–717 (LIRDIRRRGK…RQMKQKVQSL (64 aa)) constitute a bZIP domain. The segment at 656–675 (RDIRRRGKNKMAAQNCRKRK) is basic motif. The tract at residues 682 to 696 (LERDVEDLQRDKARL) is leucine-zipper. The interval 753–772 (RTMADQQARRQERKPKDRRK) is disordered. A Nuclear localization signal motif is present at residues 761-768 (RRQERKPK). Residues 763-772 (QERKPKDRRK) show a composition bias toward basic residues.

It belongs to the bZIP family. CNC subfamily. In terms of assembly, interacts with KEAP1. Interacts (via CPD region) with FBXW7; leading to its ubiquitination and degradation. Interacts with SYVN1/HRD1; leading to its ubiquitination and degradation. Interacts (when ubiquitinated) with DDI2; leading to its cleavage. As to quaternary structure, interacts (via the bZIP domain) with small MAF protein (MAFF, MAFG or MAFK); required for binding to antioxidant response elements (AREs) on DNA. Interacts (via Destruction motif) with BTRC; leading to its ubiquitination and degradation. Interacts with CEBPB; the heterodimer represses expression of DSPP during odontoblast differentiation. Interacts with MOTS-c, a peptide produced by the mitochondrially encoded 12S rRNA MT-RNR1. Cleaved at Leu-104 by the aspartyl protease DDI2 following retrotranslocation, releasing the protein from the endoplasmic reticulum membrane and forming the transcription factor NRF1 that translocates into the nucleus. Ubiquitination is prerequisite for cleavage by aspartyl protease DDI2. Post-translationally, N-glycosylated in normal conditions, when it has a single-pass type II membrane protein topology, with the DNA-binding domain facing the endoplasmic reticulum lumen. Deglycosylated during retrotranslocation to the cytosolic side of the membrane, to have a single-pass type III membrane protein topology with the major part of the protein facing the cytosol. In terms of processing, ubiquitinated by the SCF(FBXW7) complex and SYVN1/HRD1, leading to its degradation by the proteasome. Ubiquitinated during retrotranslocation to the cytosolic side of the membrane: ubiquitination does not lead to degradation and is required for processing by the aspartyl protease DDI2 and subsequent release from the endoplasmic reticulum membrane. Phosphorylation by CK2 at Ser-528 inhibits transcription factor activity, possibly by affecting DNA-binding activity. Phosphorylation at Ser-599 is required for interaction with CEBPB. Post-translationally, ubiquitinated by the SCF(BTRC) complex in the nucleus, leading to its degradation by the proteasome.

The protein localises to the endoplasmic reticulum membrane. The protein resides in the nucleus. Its function is as follows. Endoplasmic reticulum membrane sensor that translocates into the nucleus in response to various stresses to act as a transcription factor. Constitutes a precursor of the transcription factor NRF1. Able to detect various cellular stresses, such as cholesterol excess, oxidative stress or proteasome inhibition. In response to stress, it is released from the endoplasmic reticulum membrane following cleavage by the protease DDI2 and translocates into the nucleus to form the transcription factor NRF1. Acts as a key sensor of cholesterol excess: in excess cholesterol conditions, the endoplasmic reticulum membrane form of the protein directly binds cholesterol via its CRAC motif, preventing cleavage and release of the transcription factor NRF1, thereby allowing expression of genes promoting cholesterol removal, such as CD36. Involved in proteasome homeostasis: in response to proteasome inhibition, it is released from the endoplasmic reticulum membrane, translocates to the nucleus and activates expression of genes encoding proteasome subunits. CNC-type bZIP family transcription factor that translocates to the nucleus and regulates expression of target genes in response to various stresses. Heterodimerizes with small-Maf proteins (MAFF, MAFG or MAFK) and binds DNA motifs including the antioxidant response elements (AREs), which regulate expression of genes involved in oxidative stress response. Activates or represses expression of target genes, depending on the context. Plays a key role in cholesterol homeostasis by acting as a sensor of cholesterol excess: in low cholesterol conditions, translocates into the nucleus and represses expression of genes involved in defense against cholesterol excess, such as CD36. In excess cholesterol conditions, the endoplasmic reticulum membrane form of the protein directly binds cholesterol via its CRAC motif, preventing cleavage and release of the transcription factor NRF1, thereby allowing expression of genes promoting cholesterol removal. Critical for redox balance in response to oxidative stress: acts by binding the AREs motifs on promoters and mediating activation of oxidative stress response genes, such as GCLC, GCLM, GSS, MT1 and MT2. Plays an essential role during fetal liver hematopoiesis: probably has a protective function against oxidative stress and is involved in lipid homeostasis in the liver. Involved in proteasome homeostasis: in response to proteasome inhibition, mediates the 'bounce-back' of proteasome subunits by translocating into the nucleus and activating expression of genes encoding proteasome subunits. Also involved in regulating glucose flux. Together with CEBPB; represses expression of DSPP during odontoblast differentiation. In response to ascorbic acid induction, activates expression of SP7/Osterix in osteoblasts. In Pongo abelii (Sumatran orangutan), this protein is Endoplasmic reticulum membrane sensor NFE2L1.